Consider the following 487-residue polypeptide: NADH-quinone oxidoreductase subunit N (487 aa).

14 helical membrane passes run 8–28 (LIAM…MLSI), 35–55 (FINA…LYFV), 78–98 (GLVI…LVGY), 104–124 (EFYL…SANH), 125–145 (LASL…LIGY), 159–179 (YMLL…LLYA), 203–223 (ILAG…LVPF), 235–255 (PAPV…AVVM), 271–291 (LVLS…AISQ), 297–317 (LLGY…VAVQ), 328–348 (IGVY…VVSL), 376–396 (AVMT…GFIG), 409–428 (LWWL…YYYL), and 451–471 (ALTA…VLGI).

It belongs to the complex I subunit 2 family. In terms of assembly, NDH-1 is composed of 13 different subunits. Subunits NuoA, H, J, K, L, M, N constitute the membrane sector of the complex.

The protein localises to the cell inner membrane. The catalysed reaction is a quinone + NADH + 5 H(+)(in) = a quinol + NAD(+) + 4 H(+)(out). Functionally, NDH-1 shuttles electrons from NADH, via FMN and iron-sulfur (Fe-S) centers, to quinones in the respiratory chain. The immediate electron acceptor for the enzyme in this species is believed to be ubiquinone. Couples the redox reaction to proton translocation (for every two electrons transferred, four hydrogen ions are translocated across the cytoplasmic membrane), and thus conserves the redox energy in a proton gradient. In Yersinia pestis bv. Antiqua (strain Angola), this protein is NADH-quinone oxidoreductase subunit N.